A 373-amino-acid polypeptide reads, in one-letter code: Queuine tRNA-ribosyltransferase (373 aa).

The active-site Proton acceptor is the D94. Substrate-binding positions include 94-98, D148, Q190, and G217; that span reads DSGGF. The RNA binding stretch occupies residues 248 to 254; that stretch reads GVGSPDC. The active-site Nucleophile is D267. The RNA binding; important for wobble base 34 recognition stretch occupies residues 272-276; that stretch reads TRIAR. Zn(2+) is bound by residues C305, C307, C310, and H336.

It belongs to the queuine tRNA-ribosyltransferase family. As to quaternary structure, homodimer. Within each dimer, one monomer is responsible for RNA recognition and catalysis, while the other monomer binds to the replacement base PreQ1. Zn(2+) is required as a cofactor.

The catalysed reaction is 7-aminomethyl-7-carbaguanine + guanosine(34) in tRNA = 7-aminomethyl-7-carbaguanosine(34) in tRNA + guanine. The protein operates within tRNA modification; tRNA-queuosine biosynthesis. Its function is as follows. Catalyzes the base-exchange of a guanine (G) residue with the queuine precursor 7-aminomethyl-7-deazaguanine (PreQ1) at position 34 (anticodon wobble position) in tRNAs with GU(N) anticodons (tRNA-Asp, -Asn, -His and -Tyr). Catalysis occurs through a double-displacement mechanism. The nucleophile active site attacks the C1' of nucleotide 34 to detach the guanine base from the RNA, forming a covalent enzyme-RNA intermediate. The proton acceptor active site deprotonates the incoming PreQ1, allowing a nucleophilic attack on the C1' of the ribose to form the product. After dissociation, two additional enzymatic reactions on the tRNA convert PreQ1 to queuine (Q), resulting in the hypermodified nucleoside queuosine (7-(((4,5-cis-dihydroxy-2-cyclopenten-1-yl)amino)methyl)-7-deazaguanosine). The protein is Queuine tRNA-ribosyltransferase of Moorella thermoacetica (strain ATCC 39073 / JCM 9320).